Consider the following 422-residue polypeptide: Alcohol dehydrogenase 4 (422 aa).

A mitochondrion-targeting transit peptide spans 1-29 (MSILRSPFRLIRSPARFFPSLFHSSCNQS). Positions 82, 114, 141, 142, 181, 182, 190, 192, 203, and 225 each coordinate NAD(+). Fe(2+)-binding residues include Asp-237, His-241, and His-306. His-310 and His-320 together coordinate NAD(+). His-320 is a binding site for Fe(2+).

The protein belongs to the iron-containing alcohol dehydrogenase family. Requires Zn(2+) as cofactor.

It is found in the mitochondrion matrix. It catalyses the reaction a primary alcohol + NAD(+) = an aldehyde + NADH + H(+). It carries out the reaction a secondary alcohol + NAD(+) = a ketone + NADH + H(+). The catalysed reaction is ethanol + NAD(+) = acetaldehyde + NADH + H(+). Involved in ethanol oxidation in mitochondria. The chain is Alcohol dehydrogenase 4 (adh4) from Schizosaccharomyces pombe (strain 972 / ATCC 24843) (Fission yeast).